The primary structure comprises 197 residues: MTGSTETRHNEKDVKEPQVDSDADSDNEAIEHQLTEEQRRVAEAAGLGDHIDKQAKQSRSEKKARKLFSKLGLKQVTGVSRVCIRKSKNILFVINKPDVFKSPGSDTYIIFGEAKIEDLTQHAQMSAIENMKPTREAPQLKTVEEDDNEDVEEDSTGIEEKDIELVISQANTTRNKAIRALKDADNDIVNAIMSLTM.

The span at 1 to 18 (MTGSTETRHNEKDVKEPQ) shows a compositional bias: basic and acidic residues. Positions 1–30 (MTGSTETRHNEKDVKEPQVDSDADSDNEAI) are disordered. The span at 19 to 28 (VDSDADSDNE) shows a compositional bias: acidic residues. Residues 58–123 (SRSEKKARKL…AKIEDLTQHA (66 aa)) enclose the NAC-A/B domain. The tract at residues 134 to 155 (TREAPQLKTVEEDDNEDVEEDS) is disordered. The span at 144 to 155 (EEDDNEDVEEDS) shows a compositional bias: acidic residues. The 38-residue stretch at 158–195 (IEEKDIELVISQANTTRNKAIRALKDADNDIVNAIMSL) folds into the UBA domain.

Belongs to the NAC-alpha family.

In terms of biological role, may promote appropriate targeting of ribosome-nascent polypeptide complexes. The sequence is that of Nascent polypeptide-associated complex subunit alpha from Caenorhabditis briggsae.